The following is a 131-amino-acid chain: MRHRKSGRQLNRNSSHRQAMFRNMAGSLVRHEIIKTTLPKAKELRRVVEPLITLAKTDSVANRRLAFARTRDNEIVAKLFNELGPRFASRAGGYTRILKCGFRAGDNAPMAYIEFVDHAEATAPAAEATAE.

This sequence belongs to the bacterial ribosomal protein bL17 family. As to quaternary structure, part of the 50S ribosomal subunit. Contacts protein L32.

This chain is Large ribosomal subunit protein bL17, found in Sodalis glossinidius (strain morsitans).